Here is a 213-residue protein sequence, read N- to C-terminus: Uridine kinase (213 aa).

An ATP-binding site is contributed by Gly-15–Ser-22.

It belongs to the uridine kinase family.

The protein resides in the cytoplasm. The enzyme catalyses uridine + ATP = UMP + ADP + H(+). It carries out the reaction cytidine + ATP = CMP + ADP + H(+). It functions in the pathway pyrimidine metabolism; CTP biosynthesis via salvage pathway; CTP from cytidine: step 1/3. It participates in pyrimidine metabolism; UMP biosynthesis via salvage pathway; UMP from uridine: step 1/1. This is Uridine kinase from Salmonella paratyphi A (strain ATCC 9150 / SARB42).